The following is a 1457-amino-acid chain: MVVSAGPWSSEKAEMNILEINEKLRPQLAENKQQFRNLKERCFLTQLAGFLANRQKKYKYEECKDLIKFMLRNERQFKEEKLAEQLKQAEELRQYKVLVHSQERELTQLREKLREGRDASRSLNEHLQALLTPDEPDKSQGQDLQEQLAEGCRLAQQLVQKLSPENDEDEDEDVQVEEDEKVLESSAPREVQKAEESKVPEDSLEECAITCSNSHGPCDSIQPHKNIKITFEEDKVNSTVVVDRKSSHDECQDALNILPVPGPTSSATNVSMVVSAGPLSSEKAEMNILEINEKLRPQLAEKKQQFRSLKEKCFVTQLAGFLAKQQNKYKYEECKDLIKSMLRNELQFKEEKLAEQLKQAEELRQYKVLVHSQERELTQLREKLREGRDASRSLNEHLQALLTPDEPDKSQGQDLQEQLAEGCRLAQHLVQKLSPENDEDEDEDVQVEEDEKVLESSSPREMQKAEESKVPEDSLEECAITCSNSHGPCDSNQPHKNIKITFEEDKVNSSLVVDRESSHDECQDALNILPVPGPTSSATNVSMVVSAGPLSSEKAEMNILEINEKLRPQLAEKKQQFRSLKEKCFVTQVACFLAKQQNKYKYEECKDLLKSMLRNELQFKEEKLAEQLKQAEELRQYKVLVHSQERELTQLREKLREGRDASRSLNEHLQALLTPDEPDKSQGQDLQEQLAEGCRLAQHLVQKLSPENDNDDDEDVQVEVAEKVQKSSSPREMQKAEEKEVPEDSLEECAITCSNSHGPYDSNQPHRKTKITFEEDKVDSTLIGSSSHVEWEDAVHIIPENESDDEEEEEKGPVSPRNLQESEEEEVPQESWDEGYSTLSIPPERLASYQSYSSTFHSLEEQQVCMAVDIGRHRWDQVKKEDQEATGPRLSRELLAEKEPEVLQDSLDRCYSTPSVYLGLTDSCQPYRSAFYVLEQQRVGLAVDMDEIEKYQEVEEDQDPSCPRLSRELLAEKEPEVLQDSLDRCYSTPSGYLELPDLGQPYRSAVYSLEEQYLGLALDVDRIKKDQEEEEDQGPPCPRLSRELLEVVEPEVLQDSLDRCYSTPSSCLEQPDSCQPYRSSFYALEEKHVGFSLDVGEIEKKGKGKKRRGRRSKKKRRRGRKEGEEDQNPPCPRLSRELLAEKEPEVLQDSLDRWYSTPSVYLGLTDPCQPYRSAFYVLEQQRVGLAVDMDEIEKYQEVEEDQDPSCPRLSRELLAEKEPEVLQDSLDRCYSTPSGYLELPDLGQPYRSAVYSLEEQYLGLALDVDRIKKDQEEEEDQGPPCPRLSRELLEVVEPEVLQDSLDRCYSTPSSCLEQPDSCQPYRSSFYALEEKHVGFSLDVGEIEKKGKGKKRRGRRSKKKRRRGRKEGEEDQNPPCPRLNSVLMEVEEPEVLQDSLDRCYSTPSMYFELPDSFQHYRSVFYSFEEQHITFALDMDNSFFTLTVTSLHLVFQMGVIFPQ.

The stretch at arginine 75–alanine 119 forms a coiled coil. The interval leucine 162 to proline 200 is disordered. Over residues glutamate 165–lysine 181 the composition is skewed to acidic residues. Residues glutamate 165–proline 259 form the Olduvai 1 domain. Over residues glutamate 190–proline 200 the composition is skewed to basic and acidic residues. The stretch at lysine 339–alanine 390 forms a coiled coil. The tract at residues lysine 432 to glutamate 472 is disordered. Acidic residues predominate over residues glutamate 436–lysine 452. In terms of domain architecture, Olduvai 2 spans glutamate 436–proline 530. The segment covering glutamate 461–glutamate 472 has biased composition (basic and acidic residues). Residues lysine 610–alanine 661 adopt a coiled-coil conformation. Olduvai domains are found at residues glutamate 707–proline 799, glutamate 800–glycine 871, arginine 872–proline 963, serine 966–aspartate 1021, arginine 1022–lysine 1114, lysine 1115–proline 1207, serine 1210–aspartate 1265, arginine 1266–lysine 1358, and lysine 1359–glutamine 1457. 2 disordered regions span residues alanine 721–leucine 746 and tryptophan 791–threonine 838. 2 stretches are compositionally biased toward acidic residues: residues asparagine 801 to glutamate 810 and glutamate 821 to aspartate 833. The tract at residues lysine 1100–leucine 1139 is disordered. Over residues glycine 1102 to arginine 1120 the composition is skewed to basic residues. Positions lysine 1344–leucine 1378 are disordered. The segment covering glycine 1346–arginine 1364 has biased composition (basic residues).

It belongs to the NBPF family. In terms of tissue distribution, widely expressed with highest levels in brain, ovary, mammary gland, skin and adipose tissue. Also expressed in testis. Detected in a number of tumors including osteosarcoma, mammary carcinoma and hepatocellular carcinoma.

It is found in the cytoplasm. The protein is NBPF family member NBPF12 of Homo sapiens (Human).